We begin with the raw amino-acid sequence, 941 residues long: Heat shock protein 70 homolog (941 aa).

The disordered stretch occupies residues 851–887 (ENQPDIPEDSEDSESEDDTTTSKDSESSEITENLALP). A compositionally biased stretch (acidic residues) spans 856-869 (IPEDSEDSESEDDT).

Belongs to the heat shock protein 70 family.

Its function is as follows. Probable chaperone. This is Heat shock protein 70 homolog from Acanthamoeba polyphaga (Amoeba).